A 97-amino-acid chain; its full sequence is U-reduvitoxin-Pr10a (97 aa).

A signal peptide spans 1–18 (MKTALFLVFALAFIAVEG). 2 consecutive Pacifastin domains span residues 22 to 59 (KACS…CPPR) and 62 to 97 (KQSC…RLCW). 3 cysteine pairs are disulfide-bonded: Cys24–Cys42, Cys37–Cys56, and Cys40–Cys51. The interval 57–59 (PPR) is pro-Pro-Arg motif necessary for proteolytic processing. 3 cysteine pairs are disulfide-bonded: Cys65–Cys82, Cys77–Cys96, and Cys80–Cys91.

It belongs to the protease inhibitor I19 family. Expressed by the venom gland.

The protein resides in the secreted. Functionally, inhibits trypsin activity and prophenoloxidase (PPO) activation, an enzyme essential for both clotting and insect innate immune responses. It does not inhibit activity of chymotrypsin and protease K, and has no effect on phenoloxidase (PO) activity. The chain is U-reduvitoxin-Pr10a from Platymeris rhadamanthus (Red spot assassin bug).